Consider the following 229-residue polypeptide: Ribonuclease 3 (229 aa).

The RNase III domain maps to 5–127 (LARLERKLGY…LIGAIYLDAD (123 aa)). Glutamate 40 contributes to the Mg(2+) binding site. The active site involves aspartate 44. Aspartate 113 and glutamate 116 together coordinate Mg(2+). Glutamate 116 is an active-site residue. The DRBM domain maps to 154–224 (DPKTRLQEFL…AASALIALGV (71 aa)).

Belongs to the ribonuclease III family. Homodimer. Mg(2+) is required as a cofactor.

It is found in the cytoplasm. It catalyses the reaction Endonucleolytic cleavage to 5'-phosphomonoester.. Functionally, digests double-stranded RNA. Involved in the processing of primary rRNA transcript to yield the immediate precursors to the large and small rRNAs (23S and 16S). Processes some mRNAs, and tRNAs when they are encoded in the rRNA operon. Processes pre-crRNA and tracrRNA of type II CRISPR loci if present in the organism. The polypeptide is Ribonuclease 3 (Pseudomonas putida (strain GB-1)).